We begin with the raw amino-acid sequence, 336 residues long: Probable allantoicase (336 aa).

The protein belongs to the allantoicase family.

It carries out the reaction allantoate + H2O = (S)-ureidoglycolate + urea. It participates in nitrogen metabolism; (S)-allantoin degradation; (S)-ureidoglycolate from allantoate (aminidohydrolase route): step 1/1. The protein is Probable allantoicase of Ralstonia nicotianae (strain ATCC BAA-1114 / GMI1000) (Ralstonia solanacearum).